A 154-amino-acid chain; its full sequence is 3-hydroxyacyl-[acyl-carrier-protein] dehydratase FabZ (154 aa).

Histidine 57 is a catalytic residue.

The protein belongs to the thioester dehydratase family. FabZ subfamily.

Its subcellular location is the cytoplasm. It catalyses the reaction a (3R)-hydroxyacyl-[ACP] = a (2E)-enoyl-[ACP] + H2O. Involved in unsaturated fatty acids biosynthesis. Catalyzes the dehydration of short chain beta-hydroxyacyl-ACPs and long chain saturated and unsaturated beta-hydroxyacyl-ACPs. This is 3-hydroxyacyl-[acyl-carrier-protein] dehydratase FabZ from Sinorhizobium medicae (strain WSM419) (Ensifer medicae).